Here is a 396-residue protein sequence, read N- to C-terminus: ATP-dependent RNA helicase eIF4A (396 aa).

Residues 22-50 carry the Q motif motif; it reads YSFDDLNLKPNIVRGIFGYGYESPSAIQQ. A Helicase ATP-binding domain is found at 53–223; the sequence is ILPITEGRDV…TKFMNNPVRI (171 aa). 66 to 73 is an ATP binding site; the sequence is AQSGTGKT. The short motif at 171–174 is the DEAD box element; it reads DEAD. One can recognise a Helicase C-terminal domain in the interval 234 to 395; the sequence is GIKQFYINVE…EMPANIGELF (162 aa).

The protein belongs to the DEAD box helicase family. eIF4A subfamily. In terms of assembly, component of the eIF4F complex, which composition varies with external and internal environmental conditions. It is composed of at least eIF4A, eIF4E and eIF4G.

The protein localises to the cytoplasm. The enzyme catalyses ATP + H2O = ADP + phosphate + H(+). In terms of biological role, ATP-dependent RNA helicase which is a subunit of the eIF4F complex involved in cap recognition and is required for mRNA binding to ribosome. In the current model of translation initiation, eIF4A unwinds RNA secondary structures in the 5'-UTR of mRNAs which is necessary to allow efficient binding of the small ribosomal subunit, and subsequent scanning for the initiator codon. This chain is ATP-dependent RNA helicase eIF4A (TIF1), found in Meyerozyma guilliermondii (strain ATCC 6260 / CBS 566 / DSM 6381 / JCM 1539 / NBRC 10279 / NRRL Y-324) (Yeast).